Reading from the N-terminus, the 758-residue chain is Spastin (758 aa).

The tract at residues methionine 1 to histidine 99 is disordered. The Cytoplasmic portion of the chain corresponds to methionine 1 to proline 121. Positions methionine 1–alanine 210 are required for localization to punctate cytoplasmic foci. Composition is skewed to low complexity over residues serine 8–alanine 28, arginine 43–serine 58, serine 66–proline 76, and threonine 85–proline 95. Residues isoleucine 122–tyrosine 142 constitute an intramembrane region (helical). The Cytoplasmic segment spans residues leucine 143 to isoleucine 758. Polar residues-rich tracts occupy residues serine 169 to serine 180 and glutamine 189 to glutamine 198. The interval serine 169–isoleucine 203 is disordered. The segment at methionine 208–isoleucine 758 is sufficient for interaction with microtubules and microtubule severing. The MIT domain occupies histidine 233–leucine 308. Disordered stretches follow at residues arginine 353 to lysine 375 and asparagine 390 to proline 454. Composition is skewed to polar residues over residues asparagine 390–glycine 406 and glutamine 425–proline 454. Residues asparagine 443 to valine 455 form a required for interaction with microtubules region. Residue glycine 523–threonine 530 participates in ATP binding.

This sequence belongs to the AAA ATPase family. Spastin subfamily. In terms of assembly, homohexamer. The homohexamer is stabilized by ATP-binding. The homohexamer may adopt a ring conformation through which microtubules pass prior to being severed. Interacts with microtubules. Interacts with atl; may be involved in microtubule dynamics.

It is found in the membrane. It localises to the cytoplasm. The protein resides in the cytoskeleton. Its subcellular location is the microtubule organizing center. The protein localises to the centrosome. It is found in the chromosome. It localises to the lipid droplet. It carries out the reaction n ATP + n H2O + a microtubule = n ADP + n phosphate + (n+1) alpha/beta tubulin heterodimers.. In terms of biological role, ATP-dependent microtubule severing protein. Stimulates microtubule minus-end depolymerization and poleward microtubule flux in the mitotic spindle. Regulates microtubule stability in the neuromuscular junction synapse. Involved in lipid metabolism by regulating the size and distribution of lipid droplets. Involved in axon regeneration by regulating microtubule severing. The chain is Spastin from Drosophila erecta (Fruit fly).